A 360-amino-acid chain; its full sequence is Photosystem II protein D1 3 (360 aa).

A run of 3 helical transmembrane segments spans residues 29–46, 118–133, and 142–156; these read YVGW…AATI, HFLI…EWEL, and WICV…AATA. Histidine 118 contacts chlorophyll a. Tyrosine 126 lines the pheophytin a pocket. Positions 170 and 189 each coordinate [CaMn4O5] cluster. The helical transmembrane segment at 197-218 threads the bilayer; it reads FHQLGVAGVFGGALFSAMHGSL. Histidine 198 lines the chlorophyll a pocket. A quinone-binding positions include histidine 215 and 264-265; that span reads SF. Histidine 215 serves as a coordination point for Fe cation. Residue histidine 272 coordinates Fe cation. Residues 274-288 form a helical membrane-spanning segment; that stretch reads FLAAWPVIGIWFTAL. The [CaMn4O5] cluster site is built by histidine 332, glutamate 333, aspartate 342, and alanine 344. Positions 345 to 360 are excised as a propeptide; that stretch reads SAESAPVAMIAPSING.

Belongs to the reaction center PufL/M/PsbA/D family. PSII is composed of 1 copy each of membrane proteins PsbA, PsbB, PsbC, PsbD, PsbE, PsbF, PsbH, PsbI, PsbJ, PsbK, PsbL, PsbM, PsbT, PsbX, PsbY, PsbZ, Psb30/Ycf12, peripheral proteins PsbO, CyanoQ (PsbQ), PsbU, PsbV and a large number of cofactors. It forms dimeric complexes. Precursor protein interacts with Ycf48. The D1/D2 heterodimer binds P680, chlorophylls that are the primary electron donor of PSII, and subsequent electron acceptors. It shares a non-heme iron and each subunit binds pheophytin, quinone, additional chlorophylls, carotenoids and lipids. D1 provides most of the ligands for the Mn4-Ca-O5 cluster of the oxygen-evolving complex (OEC). There is also a Cl(-1) ion associated with D1 and D2, which is required for oxygen evolution. The PSII complex binds additional chlorophylls, carotenoids and specific lipids. is required as a cofactor. In terms of processing, C-terminally processed by CtpA; processing is essential to allow assembly of the oxygen-evolving complex and thus photosynthetic growth. Tyr-161 forms a radical intermediate that is referred to as redox-active TyrZ, YZ or Y-Z.

It localises to the cellular thylakoid membrane. It catalyses the reaction 2 a plastoquinone + 4 hnu + 2 H2O = 2 a plastoquinol + O2. Functionally, photosystem II (PSII) is a light-driven water:plastoquinone oxidoreductase that uses light energy to abstract electrons from H(2)O, generating O(2) and a proton gradient subsequently used for ATP formation. It consists of a core antenna complex that captures photons, and an electron transfer chain that converts photonic excitation into a charge separation. The D1/D2 (PsbA/PsbD) reaction center heterodimer binds P680, the primary electron donor of PSII as well as several subsequent electron acceptors. The chain is Photosystem II protein D1 3 from Thermosynechococcus vestitus (strain NIES-2133 / IAM M-273 / BP-1).